The following is a 224-amino-acid chain: Putative cobalt transport protein CbiM (224 aa).

6 consecutive transmembrane segments (helical) span residues 8 to 28 (LPPLWCLIYYIICIPFIVYGI), 41 to 61 (AMPMLALSGAFMFILSSLKMP), 75 to 95 (FGAVFFGPAVVGVLSVIVLVF), 108 to 128 (LGANVLSMGIIGPLCGYAVWL), 138 to 158 (EIAMFFTAFVADLMTYVVTAI), and 169 to 189 (FFTALVTFLGIFAVTQIPLAI).

This sequence belongs to the CbiM family. In terms of assembly, forms an energy-coupling factor (ECF) transporter complex composed of an ATP-binding protein (A component, CbiO), a transmembrane protein (T component, CbiQ) and 2 possible substrate-capture proteins (S components, CbiM and CbiN) of unknown stoichimetry.

The protein localises to the cell membrane. Its pathway is cofactor biosynthesis; adenosylcobalamin biosynthesis. In terms of biological role, part of the energy-coupling factor (ECF) transporter complex CbiMNOQ involved in cobalt import. The polypeptide is Putative cobalt transport protein CbiM (Methanosphaera stadtmanae (strain ATCC 43021 / DSM 3091 / JCM 11832 / MCB-3)).